The chain runs to 143 residues: MAKKIVGYIKLQIPAGKANPSPPVGPALGQRQLNIMEFCKAFNAATQKMEPGLPVPVVITAYADKSFTFILKTTPASVLIKKLAGLSKGSAQPHVDKVGKLTRSQAEEIAKIKMADLTAADMDAAVRTIAGSARSMGVEVDGV.

Belongs to the universal ribosomal protein uL11 family. As to quaternary structure, part of the ribosomal stalk of the 50S ribosomal subunit. Interacts with L10 and the large rRNA to form the base of the stalk. L10 forms an elongated spine to which L12 dimers bind in a sequential fashion forming a multimeric L10(L12)X complex. In terms of processing, one or more lysine residues are methylated.

Forms part of the ribosomal stalk which helps the ribosome interact with GTP-bound translation factors. This chain is Large ribosomal subunit protein uL11, found in Nitrosomonas europaea (strain ATCC 19718 / CIP 103999 / KCTC 2705 / NBRC 14298).